The chain runs to 197 residues: Pyridoxal 5'-phosphate synthase subunit PdxT (197 aa).

Position 53-55 (53-55 (GES)) interacts with L-glutamine. Catalysis depends on cysteine 85, which acts as the Nucleophile. Residues arginine 114 and 142–143 (IR) contribute to the L-glutamine site. Catalysis depends on charge relay system residues histidine 179 and glutamate 181.

The protein belongs to the glutaminase PdxT/SNO family. As to quaternary structure, in the presence of PdxS, forms a dodecamer of heterodimers. Only shows activity in the heterodimer.

The enzyme catalyses aldehydo-D-ribose 5-phosphate + D-glyceraldehyde 3-phosphate + L-glutamine = pyridoxal 5'-phosphate + L-glutamate + phosphate + 3 H2O + H(+). It catalyses the reaction L-glutamine + H2O = L-glutamate + NH4(+). Its pathway is cofactor biosynthesis; pyridoxal 5'-phosphate biosynthesis. Functionally, catalyzes the hydrolysis of glutamine to glutamate and ammonia as part of the biosynthesis of pyridoxal 5'-phosphate. The resulting ammonia molecule is channeled to the active site of PdxS. In Thermococcus gammatolerans (strain DSM 15229 / JCM 11827 / EJ3), this protein is Pyridoxal 5'-phosphate synthase subunit PdxT.